Reading from the N-terminus, the 267-residue chain is MHEITLLQGLSLAALVFVLGIDFWLEALFLFRPIIVCTLTGAILGDIQTGLITGGLTELAFAGLTPAGGVQPPNPIMAGLMTTVIAWSTGVDAKTAIGLGLPFSLLMQYVILFFYSAFSLFMTKADKCAKEADTAAFSRLNWTTMLIVASAYAVIAFLCTYLAQGAMQALVKAMPAWLTHGFEVAGGILPAVGFGLLLRVMFKAQYIPYLIAGFLFVCYIQVSNLLPVAVLGAGFAVYEFFNAKSRQQAQPQPVASKNEEEDYSNGI.

Topologically, residues 1 to 10 (MHEITLLQGL) are periplasmic. The PTS EIIC type-4 domain occupies 1–237 (MHEITLLQGL…VAVLGAGFAV (237 aa)). A helical membrane pass occupies residues 11 to 31 (SLAALVFVLGIDFWLEALFLF). Residues 32–33 (RP) lie on the Cytoplasmic side of the membrane. Residues 34–54 (IIVCTLTGAILGDIQTGLITG) form a helical membrane-spanning segment. Residues 55 to 66 (GLTELAFAGLTP) are Periplasmic-facing. Residues 67 to 87 (AGGVQPPNPIMAGLMTTVIAW) form a helical membrane-spanning segment. The Cytoplasmic portion of the chain corresponds to 88 to 94 (STGVDAK). A helical transmembrane segment spans residues 95–115 (TAIGLGLPFSLLMQYVILFFY). The Periplasmic segment spans residues 116–141 (SAFSLFMTKADKCAKEADTAAFSRLN). A helical transmembrane segment spans residues 142 to 162 (WTTMLIVASAYAVIAFLCTYL). The Cytoplasmic portion of the chain corresponds to 163 to 177 (AQGAMQALVKAMPAW). Residues 178-198 (LTHGFEVAGGILPAVGFGLLL) form a helical membrane-spanning segment. The Periplasmic segment spans residues 199 to 209 (RVMFKAQYIPY). A helical membrane pass occupies residues 210–230 (LIAGFLFVCYIQVSNLLPVAV). The Cytoplasmic portion of the chain corresponds to 231-267 (LGAGFAVYEFFNAKSRQQAQPQPVASKNEEEDYSNGI).

It is found in the cell inner membrane. Functionally, the phosphoenolpyruvate-dependent sugar phosphotransferase system (PTS), a major carbohydrate active -transport system, catalyzes the phosphorylation of incoming sugar substrates concomitant with their translocation across the cell membrane. This system is involved in N-acetylgalactosamine transport. This chain is N-acetylgalactosamine permease IIC component 1 (agaC), found in Escherichia coli (strain K12).